The following is a 317-amino-acid chain: Aspartate carbamoyltransferase catalytic subunit (317 aa).

Carbamoyl phosphate is bound by residues Arg66 and Thr67. Lys94 is a binding site for L-aspartate. Carbamoyl phosphate contacts are provided by Arg116, His144, and Gln147. L-aspartate contacts are provided by Arg177 and Arg231. Residues Gly272 and Pro273 each coordinate carbamoyl phosphate.

Belongs to the aspartate/ornithine carbamoyltransferase superfamily. ATCase family. As to quaternary structure, heterododecamer (2C3:3R2) of six catalytic PyrB chains organized as two trimers (C3), and six regulatory PyrI chains organized as three dimers (R2).

The enzyme catalyses carbamoyl phosphate + L-aspartate = N-carbamoyl-L-aspartate + phosphate + H(+). It functions in the pathway pyrimidine metabolism; UMP biosynthesis via de novo pathway; (S)-dihydroorotate from bicarbonate: step 2/3. Functionally, catalyzes the condensation of carbamoyl phosphate and aspartate to form carbamoyl aspartate and inorganic phosphate, the committed step in the de novo pyrimidine nucleotide biosynthesis pathway. The protein is Aspartate carbamoyltransferase catalytic subunit of Nitrobacter winogradskyi (strain ATCC 25391 / DSM 10237 / CIP 104748 / NCIMB 11846 / Nb-255).